The primary structure comprises 389 residues: Major outer membrane porin (389 aa).

Belongs to the chlamydial porin (CP) (TC 1.B.2) family. As to quaternary structure, part of a disulfide cross-linked outer membrane complex (COMC) composed of the major outer membrane porin (MOMP), the small cysteine-rich protein (OmcA) and the large cysteine-rich periplasmic protein (OmcB).

The protein localises to the cell outer membrane. Functionally, in elementary bodies (EBs, the infectious stage, which is able to survive outside the host cell) provides the structural integrity of the outer envelope through disulfide cross-links with the small cysteine-rich protein and the large cysteine-rich periplasmic protein. It has been described in publications as the Sarkosyl-insoluble COMC (Chlamydia outer membrane complex), and serves as the functional equivalent of peptidoglycan. In terms of biological role, permits diffusion of specific solutes through the outer membrane. The chain is Major outer membrane porin (ompA) from Chlamydia pneumoniae (Chlamydophila pneumoniae).